Consider the following 238-residue polypeptide: Uridylate kinase (238 aa).

12–15 (KLSG) provides a ligand contact to ATP. Glycine 54 provides a ligand contact to UMP. ATP contacts are provided by glycine 55 and arginine 59. UMP is bound by residues aspartate 74 and 135-142 (TGNPYFTT). The ATP site is built by threonine 162, asparagine 163, tyrosine 168, and aspartate 171.

It belongs to the UMP kinase family. Homohexamer.

The protein resides in the cytoplasm. The catalysed reaction is UMP + ATP = UDP + ADP. Its pathway is pyrimidine metabolism; CTP biosynthesis via de novo pathway; UDP from UMP (UMPK route): step 1/1. With respect to regulation, inhibited by UTP. Its function is as follows. Catalyzes the reversible phosphorylation of UMP to UDP. This Bradyrhizobium sp. (strain BTAi1 / ATCC BAA-1182) protein is Uridylate kinase.